A 153-amino-acid polypeptide reads, in one-letter code: SsrA-binding protein (153 aa).

The protein belongs to the SmpB family.

The protein localises to the cytoplasm. Functionally, required for rescue of stalled ribosomes mediated by trans-translation. Binds to transfer-messenger RNA (tmRNA), required for stable association of tmRNA with ribosomes. tmRNA and SmpB together mimic tRNA shape, replacing the anticodon stem-loop with SmpB. tmRNA is encoded by the ssrA gene; the 2 termini fold to resemble tRNA(Ala) and it encodes a 'tag peptide', a short internal open reading frame. During trans-translation Ala-aminoacylated tmRNA acts like a tRNA, entering the A-site of stalled ribosomes, displacing the stalled mRNA. The ribosome then switches to translate the ORF on the tmRNA; the nascent peptide is terminated with the 'tag peptide' encoded by the tmRNA and targeted for degradation. The ribosome is freed to recommence translation, which seems to be the essential function of trans-translation. The protein is SsrA-binding protein of Sulfurovum sp. (strain NBC37-1).